Here is a 384-residue protein sequence, read N- to C-terminus: Heparin lyase I (384 aa).

Positions 1–21 are cleaved as a signal peptide; that stretch reads MKKQILYLIVLQQLFLCSAYA. Gln-22 carries the blocked amino end (Gln) modification. O-linked (Man...) serine glycosylation is present at Ser-39.

As to quaternary structure, monomer. In terms of processing, the N-terminus is blocked.

The protein localises to the periplasm. The catalysed reaction is Eliminative cleavage of polysaccharides containing (1-&gt;4)-linked D-glucuronate or L-iduronate residues and (1-&gt;4)-alpha-linked 2-sulfoamino-2-deoxy-6-sulfo-D-glucose residues to give oligosaccharides with terminal 4-deoxy-alpha-D-gluc-4-enuronosyl groups at their non-reducing ends.. Degrades heparin and heparan sulfate. Also implicated in the release of heparin-bound growth factors from the extracellular matrix. In Pedobacter heparinus (Flavobacterium heparinum), this protein is Heparin lyase I.